The chain runs to 144 residues: Large ribosomal subunit protein uL16 (144 aa).

This sequence belongs to the universal ribosomal protein uL16 family. In terms of assembly, part of the 50S ribosomal subunit.

Functionally, binds 23S rRNA and is also seen to make contacts with the A and possibly P site tRNAs. The protein is Large ribosomal subunit protein uL16 of Bacillus mycoides (strain KBAB4) (Bacillus weihenstephanensis).